The sequence spans 238 residues: ATP synthase subunit a (238 aa).

A run of 5 helical transmembrane segments spans residues 18 to 38 (LTIL…VFWA), 75 to 95 (YSLL…LGLM), 112 to 132 (NFGV…IEGI), 179 to 199 (VVTG…PLAF), and 203 to 223 (IVWT…FIIL).

It belongs to the ATPase A chain family. In terms of assembly, F-type ATPases have 2 components, CF(1) - the catalytic core - and CF(0) - the membrane proton channel. CF(1) has five subunits: alpha(3), beta(3), gamma(1), delta(1), epsilon(1). CF(0) has three main subunits: a(1), b(2) and c(9-12). The alpha and beta chains form an alternating ring which encloses part of the gamma chain. CF(1) is attached to CF(0) by a central stalk formed by the gamma and epsilon chains, while a peripheral stalk is formed by the delta and b chains.

The protein localises to the cell membrane. In terms of biological role, key component of the proton channel; it plays a direct role in the translocation of protons across the membrane. The protein is ATP synthase subunit a of Streptococcus agalactiae serotype III (strain NEM316).